The chain runs to 582 residues: Inositol transporter 4 (582 aa).

The next 12 helical transmembrane spans lie at 35–55, 70–90, 105–125, 128–148, 162–182, 188–208, 290–310, 317–337, 345–365, 456–476, 494–514, and 525–545; these read GIGGLLFGYDTGVISGALLFI, STIVSMAVAGAIVGAAVGGWI, VLFLIGAIVMAFAPAPWVIIV, IFVGFGVGMASMTSPLYISEA, GLLITGGQFFSYLINLAFVHT, WMLGVAGVPAIVQFVLMLSLP, FVGINTVMYYSPSIVQFAGYA, ALSLITSGLNALGSIVSMMFV, LMIISMFGIIACLIILATVFS, FGFLAIVFLGLYIVVYAPGMG, LGGGIAAVSNWVSNLIVSESF, and GTFLLFAGFSTIGLFFIWLLV.

This sequence belongs to the major facilitator superfamily. Sugar transporter (TC 2.A.1.1) family. In terms of tissue distribution, highly expressed in pollen and phloem companion cells.

The protein resides in the cell membrane. Functionally, plasma membrane inositol-proton symporter. Mediates high-affinity myoinositol-proton symport across the plasma membrane. Active with myoinositol, scylloinositol and D-chiroinositol. Low activity with mucoinositol and alloinositol. This Arabidopsis thaliana (Mouse-ear cress) protein is Inositol transporter 4 (INT4).